Reading from the N-terminus, the 187-residue chain is Dirigent protein 6 (187 aa).

A signal peptide spans 1–29 (MAFLVEKQLFKALFSFFLLVLLFSDTVLS). Cys-40 and Cys-186 form a disulfide bridge. Residues Asn-59 and Asn-123 are each glycosylated (N-linked (GlcNAc...) asparagine).

It belongs to the plant dirigent protein family. In terms of assembly, homodimer. Expressed in roots, cotyledon veins, leaf trichomes, flowers, siliques, and meristems. Present in interfascicular/vascular cambia and developing xylem.

Its subcellular location is the secreted. It is found in the extracellular space. The protein resides in the apoplast. Its function is as follows. Dirigent proteins impart stereoselectivity on the phenoxy radical-coupling reaction, yielding optically active lignans from two molecules of coniferyl alcohol in the biosynthesis of lignans, flavonolignans, and alkaloids and thus plays a central role in plant secondary metabolism. Enantiocomplementary dirigent protein that mediates the laccase-catalyzed enantioselective oxidative phenol coupling of (E)-coniferyl alcohol to (-)-pinoresinol. This is Dirigent protein 6 (DIR6) from Arabidopsis thaliana (Mouse-ear cress).